The chain runs to 305 residues: Oxygen-dependent coproporphyrinogen-III oxidase (305 aa).

Residue S98 coordinates substrate. A divalent metal cation is bound by residues H102 and H112. The Proton donor role is filled by H112. A substrate-binding site is contributed by 114 to 116 (NVR). Residues H151 and H181 each coordinate a divalent metal cation. The important for dimerization stretch occupies residues 246 to 281 (YVEFNLVYDRGTLFGLQSGGRTESILMSMPPLARWE). A substrate-binding site is contributed by 264–266 (GGR).

Belongs to the aerobic coproporphyrinogen-III oxidase family. As to quaternary structure, homodimer. The cofactor is a divalent metal cation.

The protein resides in the cytoplasm. The catalysed reaction is coproporphyrinogen III + O2 + 2 H(+) = protoporphyrinogen IX + 2 CO2 + 2 H2O. It functions in the pathway porphyrin-containing compound metabolism; protoporphyrin-IX biosynthesis; protoporphyrinogen-IX from coproporphyrinogen-III (O2 route): step 1/1. In terms of biological role, involved in the heme biosynthesis. Catalyzes the aerobic oxidative decarboxylation of propionate groups of rings A and B of coproporphyrinogen-III to yield the vinyl groups in protoporphyrinogen-IX. The protein is Oxygen-dependent coproporphyrinogen-III oxidase of Vibrio vulnificus (strain YJ016).